The primary structure comprises 159 residues: Major latex protein 146 (159 aa).

The protein belongs to the MLP family. As to expression, laticifer.

The protein localises to the vacuole. The protein resides in the cytoplasmic vesicle. In terms of biological role, not known; MLPs constitute up to 50% of the soluble latex protein. This is Major latex protein 146 (MLP146) from Papaver somniferum (Opium poppy).